The sequence spans 170 residues: FMRFamide-like neuropeptides 6 (170 aa).

An N-terminal signal peptide occupies residues methionine 1–alanine 19. A Pyrrolidone carboxylic acid modification is found at glutamine 20. A Phenylalanine amide modification is found at phenylalanine 39. Positions serine 42 to glutamate 51 are excised as a propeptide. Phenylalanine 60 is modified (phenylalanine amide). A propeptide spanning residues arginine 63–glutamate 81 is cleaved from the precursor. Phenylalanine 90 carries the post-translational modification Phenylalanine amide. The propeptide occupies arginine 93–glutamate 104. Phenylalanine 113 bears the Phenylalanine amide mark. Positions arginine 116–phenylalanine 136 are excised as a propeptide. Residue phenylalanine 145 is modified to Phenylalanine amide. Residues arginine 148–methionine 159 constitute a propeptide that is removed on maturation. The tract at residues methionine 150–arginine 170 is disordered. Basic residues predominate over residues methionine 159–arginine 170. Phenylalanine 168 bears the Phenylalanine amide mark.

The protein belongs to the FARP (FMRFamide related peptide) family. Each flp gene is expressed in a distinct set of neurons. Flp-6 is expressed in the ASE sensory neurons, AFD, ASG, PVT and I1 neurons.

It is found in the secreted. Its function is as follows. FMRFamides and FMRFamide-like peptides are neuropeptides. KSAYMRF-amide has an excitatory effect on dissected pharyngeal myogenic muscle system. The polypeptide is FMRFamide-like neuropeptides 6 (Caenorhabditis elegans).